Here is a 953-residue protein sequence, read N- to C-terminus: Dual serine/threonine and tyrosine protein kinase (953 aa).

A Protein kinase domain is found at 665–926; sequence PKLEREIGRG…VQSKLQDIYT (262 aa). ATP is bound by residues 671 to 679 and lysine 694; that span reads IGRGQYGVV. Catalysis depends on aspartate 791, which acts as the Proton acceptor. Positions 932 to 953 are disordered; sequence REAEGGGGGGAKEQQNLKSDTL.

It belongs to the protein kinase superfamily. Ser/Thr protein kinase family.

It localises to the cytoplasm. Its subcellular location is the cell membrane. It is found in the apical cell membrane. The protein resides in the basolateral cell membrane. The protein localises to the cell junction. The catalysed reaction is L-seryl-[protein] + ATP = O-phospho-L-seryl-[protein] + ADP + H(+). It catalyses the reaction L-threonyl-[protein] + ATP = O-phospho-L-threonyl-[protein] + ADP + H(+). It carries out the reaction L-tyrosyl-[protein] + ATP = O-phospho-L-tyrosyl-[protein] + ADP + H(+). In terms of biological role, may act as a positive regulator of ERK phosphorylation downstream of fibroblast growth factor-receptor activation. May induce both caspase-dependent apoptosis and caspase-independent cell death. May play a role in the embryonic development. This chain is Dual serine/threonine and tyrosine protein kinase, found in Strongylocentrotus purpuratus (Purple sea urchin).